We begin with the raw amino-acid sequence, 120 residues long: Large ribosomal subunit protein uL18 (120 aa).

The protein belongs to the universal ribosomal protein uL18 family. Part of the 50S ribosomal subunit; part of the 5S rRNA/L5/L18/L25 subcomplex. Contacts the 5S and 23S rRNAs.

In terms of biological role, this is one of the proteins that bind and probably mediate the attachment of the 5S RNA into the large ribosomal subunit, where it forms part of the central protuberance. The chain is Large ribosomal subunit protein uL18 from Chloroflexus aurantiacus (strain ATCC 29364 / DSM 637 / Y-400-fl).